Here is a 303-residue protein sequence, read N- to C-terminus: Digeranylgeranylglyceryl phosphate synthase (303 aa).

The next 7 membrane-spanning stretches (helical) occupy residues 23-43 (VLGV…AAIA), 88-108 (LALA…PLTG), 130-150 (LPGN…GSLA), 164-184 (TIPI…VKGV), 206-228 (FALR…AAPL), 232-254 (GYAF…AACL), and 272-292 (VAMF…PVFY).

Belongs to the UbiA prenyltransferase family. DGGGP synthase subfamily. Mg(2+) serves as cofactor.

The protein localises to the cell membrane. It carries out the reaction sn-3-O-(geranylgeranyl)glycerol 1-phosphate + (2E,6E,10E)-geranylgeranyl diphosphate = 2,3-bis-O-(geranylgeranyl)-sn-glycerol 1-phosphate + diphosphate. The protein operates within membrane lipid metabolism; glycerophospholipid metabolism. Prenyltransferase that catalyzes the transfer of the geranylgeranyl moiety of geranylgeranyl diphosphate (GGPP) to the C2 hydroxyl of (S)-3-O-geranylgeranylglyceryl phosphate (GGGP). This reaction is the second ether-bond-formation step in the biosynthesis of archaeal membrane lipids. The chain is Digeranylgeranylglyceryl phosphate synthase from Ignicoccus hospitalis (strain KIN4/I / DSM 18386 / JCM 14125).